Consider the following 323-residue polypeptide: GTP 3',8-cyclase (323 aa).

The Radical SAM core domain occupies Lys4–Pro228. Position 13 (Arg13) interacts with GTP. Positions 20 and 24 each coordinate [4Fe-4S] cluster. Tyr26 lines the S-adenosyl-L-methionine pocket. A [4Fe-4S] cluster-binding site is contributed by Cys27. Arg63 is a binding site for GTP. Residue Gly67 participates in S-adenosyl-L-methionine binding. Residue Thr94 coordinates GTP. Ser118 is a binding site for S-adenosyl-L-methionine. Residue Lys155 coordinates GTP. An S-adenosyl-L-methionine-binding site is contributed by Met189. [4Fe-4S] cluster contacts are provided by Cys252 and Cys255. Residue Arg257 to Arg259 participates in GTP binding. Cys269 lines the [4Fe-4S] cluster pocket.

The protein belongs to the radical SAM superfamily. MoaA family. In terms of assembly, monomer and homodimer. [4Fe-4S] cluster is required as a cofactor.

It carries out the reaction GTP + AH2 + S-adenosyl-L-methionine = (8S)-3',8-cyclo-7,8-dihydroguanosine 5'-triphosphate + 5'-deoxyadenosine + L-methionine + A + H(+). It functions in the pathway cofactor biosynthesis; molybdopterin biosynthesis. In terms of biological role, catalyzes the cyclization of GTP to (8S)-3',8-cyclo-7,8-dihydroguanosine 5'-triphosphate. This chain is GTP 3',8-cyclase, found in Petrotoga mobilis (strain DSM 10674 / SJ95).